The following is a 218-amino-acid chain: Phosphoribosylformylglycinamidine synthase subunit PurQ (218 aa).

Residues 2–218 (SIAVLRFPGT…GARMLRGLAC (217 aa)) enclose the Glutamine amidotransferase type-1 domain. The Nucleophile role is filled by cysteine 86. Residues histidine 195 and glutamate 197 contribute to the active site.

As to quaternary structure, part of the FGAM synthase complex composed of 1 PurL, 1 PurQ and 2 PurS subunits.

The protein resides in the cytoplasm. The enzyme catalyses N(2)-formyl-N(1)-(5-phospho-beta-D-ribosyl)glycinamide + L-glutamine + ATP + H2O = 2-formamido-N(1)-(5-O-phospho-beta-D-ribosyl)acetamidine + L-glutamate + ADP + phosphate + H(+). It catalyses the reaction L-glutamine + H2O = L-glutamate + NH4(+). It functions in the pathway purine metabolism; IMP biosynthesis via de novo pathway; 5-amino-1-(5-phospho-D-ribosyl)imidazole from N(2)-formyl-N(1)-(5-phospho-D-ribosyl)glycinamide: step 1/2. Part of the phosphoribosylformylglycinamidine synthase complex involved in the purines biosynthetic pathway. Catalyzes the ATP-dependent conversion of formylglycinamide ribonucleotide (FGAR) and glutamine to yield formylglycinamidine ribonucleotide (FGAM) and glutamate. The FGAM synthase complex is composed of three subunits. PurQ produces an ammonia molecule by converting glutamine to glutamate. PurL transfers the ammonia molecule to FGAR to form FGAM in an ATP-dependent manner. PurS interacts with PurQ and PurL and is thought to assist in the transfer of the ammonia molecule from PurQ to PurL. The sequence is that of Phosphoribosylformylglycinamidine synthase subunit PurQ from Wolinella succinogenes (strain ATCC 29543 / DSM 1740 / CCUG 13145 / JCM 31913 / LMG 7466 / NCTC 11488 / FDC 602W) (Vibrio succinogenes).